The sequence spans 143 residues: 1,4-dihydroxy-2-naphthoyl-CoA hydrolase (143 aa).

D14 is a catalytic residue.

It belongs to the 4-hydroxybenzoyl-CoA thioesterase family. DHNA-CoA hydrolase subfamily.

It carries out the reaction 1,4-dihydroxy-2-naphthoyl-CoA + H2O = 1,4-dihydroxy-2-naphthoate + CoA + H(+). It participates in cofactor biosynthesis; phylloquinone biosynthesis. The protein operates within quinol/quinone metabolism; 1,4-dihydroxy-2-naphthoate biosynthesis; 1,4-dihydroxy-2-naphthoate from chorismate: step 7/7. Functionally, catalyzes the hydrolysis of 1,4-dihydroxy-2-naphthoyl-CoA (DHNA-CoA) to 1,4-dihydroxy-2-naphthoate (DHNA), a reaction involved in phylloquinone (vitamin K1) biosynthesis. In Gloeothece citriformis (strain PCC 7424) (Cyanothece sp. (strain PCC 7424)), this protein is 1,4-dihydroxy-2-naphthoyl-CoA hydrolase.